We begin with the raw amino-acid sequence, 511 residues long: Tryptophan 5-halogenase PyrH (511 aa).

FAD is bound by residues glycine 10, alanine 13, serine 36, valine 39, isoleucine 42, valine 44, and alanine 47. Serine 50 lines the L-tryptophan pocket. Lysine 75 is an active-site residue. L-tryptophan is bound by residues proline 93, glutamine 160, and glutamine 163. 2 residues coordinate FAD: valine 195 and leucine 345. The chloride site is built by threonine 356 and glycine 357. Residue isoleucine 358 coordinates FAD. Positions 450 and 454 each coordinate L-tryptophan.

It belongs to the flavin-dependent halogenase family. Bacterial tryptophan halogenase subfamily. Homodimer.

It carries out the reaction L-tryptophan + FADH2 + chloride + O2 = 5-chloro-L-tryptophan + FAD + 2 H2O. Its pathway is antibiotic biosynthesis. Functionally, involved in the biosynthesis of the antibiotic compound pyrroindomycin B. Catalyzes the chlorination of tryptophan (Trp) at C5 position to yield 5-chloro-L-tryptophan. It is also able to use bromide ions to generate monobrominated Trp, but the brominating activity is only about 75% of the chlorinating activity. This is Tryptophan 5-halogenase PyrH from Streptomyces rugosporus.